A 493-amino-acid chain; its full sequence is MNKHASQPRAIYYVVALQIWEYFSFYGMRALLILYLTNQLKYNDTHAYELFSAYCSLVYVTPILGGFLADKVLGNRMAVMLGALLMAIGHVVLGASEIHPSFLYLSLAIIVCGYGLFKSNVSCLLGELYEPTDPRRDGGFSLMYAAGNVGSIIAPIACGYAQEEYSWAMGFGLAAVGMIAGLVIFLCGNRHFTHTRGVNKKVLRATNFLLPNWGWLLVLLVATPALITVLFWKEWSVYALIVATIIGLGVLAKIYRKAENQKQRKELRLIVTLTFFSMLFWAFAQQGGSSISLYIDRFVNRDMFGYTVPTAMFQSINAFAVMLCGVFLAWVVKESVAGNRTVRIWGKFALGLGLMSAGFCILTLSARWSAMYGHSSLPLMVLGLAVMGFAELFIDPVAMSQITRIEIPGVTGVLTGIYMLLSGAIANYLAGVIADQTSQASFDASGAINYSINAYIEVFDQITWGALACVGVVLMIWLYQALKFRNRALALES.

Topologically, residues 1–13 (MNKHASQPRAIYY) are cytoplasmic. Residues 14-34 (VVALQIWEYFSFYGMRALLIL) traverse the membrane as a helical segment. Over 35 to 48 (YLTNQLKYNDTHAY) the chain is Periplasmic. The chain crosses the membrane as a helical span at residues 49-69 (ELFSAYCSLVYVTPILGGFLA). At 70-77 (DKVLGNRM) the chain is on the cytoplasmic side. The helical transmembrane segment at 78 to 98 (AVMLGALLMAIGHVVLGASEI) threads the bilayer. Topologically, residues 99-100 (HP) are periplasmic. A helical transmembrane segment spans residues 101-121 (SFLYLSLAIIVCGYGLFKSNV). Over 122–137 (SCLLGELYEPTDPRRD) the chain is Cytoplasmic. The helical transmembrane segment at 138–158 (GGFSLMYAAGNVGSIIAPIAC) threads the bilayer. The Periplasmic portion of the chain corresponds to 159-166 (GYAQEEYS). The chain crosses the membrane as a helical span at residues 167 to 187 (WAMGFGLAAVGMIAGLVIFLC). At 188–211 (GNRHFTHTRGVNKKVLRATNFLLP) the chain is on the cytoplasmic side. The helical transmembrane segment at 212-232 (NWGWLLVLLVATPALITVLFW) threads the bilayer. Over 233–234 (KE) the chain is Periplasmic. Residues 235–255 (WSVYALIVATIIGLGVLAKIY) form a helical membrane-spanning segment. The Cytoplasmic portion of the chain corresponds to 256–268 (RKAENQKQRKELR). The chain crosses the membrane as a helical span at residues 269–289 (LIVTLTFFSMLFWAFAQQGGS). At 290–311 (SISLYIDRFVNRDMFGYTVPTA) the chain is on the periplasmic side. The helical transmembrane segment at 312–332 (MFQSINAFAVMLCGVFLAWVV) threads the bilayer. Over 333-343 (KESVAGNRTVR) the chain is Cytoplasmic. Residues 344–364 (IWGKFALGLGLMSAGFCILTL) traverse the membrane as a helical segment. Residues 365–378 (SARWSAMYGHSSLP) are Periplasmic-facing. The helical transmembrane segment at 379-399 (LMVLGLAVMGFAELFIDPVAM) threads the bilayer. Over 400-412 (SQITRIEIPGVTG) the chain is Cytoplasmic. Residues 413–433 (VLTGIYMLLSGAIANYLAGVI) traverse the membrane as a helical segment. Residues 434–461 (ADQTSQASFDASGAINYSINAYIEVFDQ) are Periplasmic-facing. Residues 462–482 (ITWGALACVGVVLMIWLYQAL) form a helical membrane-spanning segment. At 483–493 (KFRNRALALES) the chain is on the cytoplasmic side.

This sequence belongs to the major facilitator superfamily. Proton-dependent oligopeptide transporter (POT/PTR) (TC 2.A.17) family. DtpD subfamily. In terms of assembly, monomer in solution. Exhibits a doughnut-like shape with a central, shallow depression and has a diameter of 8 nm.

It is found in the cell inner membrane. Probable proton-dependent permease that transports dipeptides. The protein is Dipeptide permease D (dtpD) of Escherichia coli O157:H7.